Here is a 306-residue protein sequence, read N- to C-terminus: Homoserine kinase (306 aa).

90 to 100 (PLARGLGSSAS) is an ATP binding site.

The protein belongs to the GHMP kinase family. Homoserine kinase subfamily.

The protein localises to the cytoplasm. The catalysed reaction is L-homoserine + ATP = O-phospho-L-homoserine + ADP + H(+). The protein operates within amino-acid biosynthesis; L-threonine biosynthesis; L-threonine from L-aspartate: step 4/5. Its function is as follows. Catalyzes the ATP-dependent phosphorylation of L-homoserine to L-homoserine phosphate. The sequence is that of Homoserine kinase from Staphylococcus epidermidis (strain ATCC 12228 / FDA PCI 1200).